The sequence spans 34 residues: Trypsin inhibitor 2 (34 aa).

The segment at residues 1 to 34 (SGSDGGVCPKILKKCRRDSDCPGACICRGNGYCG) is a cross-link (cyclopeptide (Ser-Gly)). The (2-aminosuccinimidyl)acetic acid (Asp-Gly); alternate cross-link spans 4 to 5 (DG). The isoaspartyl glycine isopeptide (Asp-Gly); alternate cross-link spans 4–5 (DG). Cystine bridges form between C8–C25, C15–C27, and C21–C33.

Post-translationally, a cyclic succinimide probably forms by loss of water between Asp-4 and Gly-5, that can then rehydrate to either the original peptide bond or to a beta-aspartyl isopeptide bond. Three isoforms of MCoTI-II are detected, two with the parent molecular weight, corresponding to the unmodified and proposed isopeptide forms, and one with a molecular weight 18 Da lower, corresponding to a succinimide cross-linked form. In terms of processing, this is a cyclic peptide.

It is found in the secreted. In terms of biological role, inhibits trypsin; probably participates in a plant defense mechanism. This chain is Trypsin inhibitor 2, found in Momordica cochinchinensis (Spiny bitter cucumber).